The sequence spans 311 residues: MIDVLFLGTGGGMPTPRRSLSSLLLNFKGCKILVDCGEGTQLSMKNAKTGFKDIDIICITHCHGDHIIGFPGILSTIGNSGRTNPLTIIGPKDITRIVKGLTVITPYLPYELNIIENPMQKLSFNVTKENLKLESGGELLIDTLELNHSIPCIAYNFTVKRKPKFNREKAVNYNIPRKFWGDLQVGKNINYEGRVYTPSMVLGKERKGIKISFVTDTTPIDSIISFIEESDMFICEGTYGTDDDIDKAIKNKHMTFSQAATLAFRGNVKELILTHFGVTMERPEEFLGFARKIFKNSYVAEDRMIKSLKFD.

Histidine 61, histidine 63, aspartate 65, histidine 66, histidine 148, aspartate 216, and histidine 275 together coordinate Zn(2+). Aspartate 65 functions as the Proton acceptor in the catalytic mechanism.

The protein belongs to the RNase Z family. Homodimer. The cofactor is Zn(2+).

It carries out the reaction Endonucleolytic cleavage of RNA, removing extra 3' nucleotides from tRNA precursor, generating 3' termini of tRNAs. A 3'-hydroxy group is left at the tRNA terminus and a 5'-phosphoryl group is left at the trailer molecule.. Its function is as follows. Zinc phosphodiesterase, which displays some tRNA 3'-processing endonuclease activity. Probably involved in tRNA maturation, by removing a 3'-trailer from precursor tRNA. The sequence is that of Ribonuclease Z from Clostridium novyi (strain NT).